The sequence spans 267 residues: Proteasome subunit alpha (267 aa).

Positions 231–267 (ETLLQERDSKESAESEEPIESEEGKKTGKKSDADSSD) are disordered. Basic and acidic residues-rich tracts occupy residues 234–243 (LQERDSKESA) and 252–267 (EEGKKTGKKSDADSSD).

It belongs to the peptidase T1A family. As to quaternary structure, the 20S proteasome core is composed of 14 alpha and 14 beta subunits that assemble into four stacked heptameric rings, resulting in a barrel-shaped structure. The two inner rings, each composed of seven catalytic beta subunits, are sandwiched by two outer rings, each composed of seven alpha subunits. The catalytic chamber with the active sites is on the inside of the barrel. Has a gated structure, the ends of the cylinder being occluded by the N-termini of the alpha-subunits. Is capped by the proteasome-associated ATPase, ARC.

It localises to the cytoplasm. It participates in protein degradation; proteasomal Pup-dependent pathway. Its activity is regulated as follows. The formation of the proteasomal ATPase ARC-20S proteasome complex, likely via the docking of the C-termini of ARC into the intersubunit pockets in the alpha-rings, may trigger opening of the gate for substrate entry. Interconversion between the open-gate and close-gate conformations leads to a dynamic regulation of the 20S proteasome proteolysis activity. Functionally, component of the proteasome core, a large protease complex with broad specificity involved in protein degradation. In Mycobacterium ulcerans (strain Agy99), this protein is Proteasome subunit alpha.